Reading from the N-terminus, the 86-residue chain is Small ribosomal subunit protein bS16 (86 aa).

This sequence belongs to the bacterial ribosomal protein bS16 family.

This is Small ribosomal subunit protein bS16 from Myxococcus xanthus (strain DK1622).